A 142-amino-acid polypeptide reads, in one-letter code: Large ribosomal subunit protein uL11 (142 aa).

Belongs to the universal ribosomal protein uL11 family. Part of the ribosomal stalk of the 50S ribosomal subunit. Interacts with L10 and the large rRNA to form the base of the stalk. L10 forms an elongated spine to which L12 dimers bind in a sequential fashion forming a multimeric L10(L12)X complex. Post-translationally, one or more lysine residues are methylated.

Its function is as follows. Forms part of the ribosomal stalk which helps the ribosome interact with GTP-bound translation factors. The chain is Large ribosomal subunit protein uL11 from Aeromonas hydrophila subsp. hydrophila (strain ATCC 7966 / DSM 30187 / BCRC 13018 / CCUG 14551 / JCM 1027 / KCTC 2358 / NCIMB 9240 / NCTC 8049).